We begin with the raw amino-acid sequence, 727 residues long: Pentatricopeptide repeat-containing protein At2g33680 (727 aa).

PPR repeat units lie at residues 13 to 47, 48 to 78, 79 to 116, 117 to 150, 152 to 182, 183 to 213, 220 to 254, 255 to 285, 286 to 320, 321 to 355, 356 to 386, 387 to 421, 422 to 456, 457 to 487, 488 to 522, 523 to 553, and 559 to 593; these read HTST…GAST, CIQH…IICK, DVVS…DILP, NAYT…MSSF, DIYV…MPER, NTYT…FLRE, SDYV…GLLG, FVAL…SGDR, NSIT…GIKP, SEYT…GFER, HLFA…LQER, DVAL…GIIP, NDPT…GFGL, EVPI…TPNK, DVVS…GMEP, DDVT…MSDQ, and KVDH…HGLC. A type E motif region spans residues 594 to 669; it reads LWRILLSACK…EVGCSWIELK (76 aa). The segment at 670–700 is type E(+) motif; that stretch reads NQYHVFVVGDTMHPMIEETKDLVCLVSRQMI.

This sequence belongs to the PPR family. PCMP-E subfamily.

This is Pentatricopeptide repeat-containing protein At2g33680 (PCMP-E19) from Arabidopsis thaliana (Mouse-ear cress).